We begin with the raw amino-acid sequence, 1053 residues long: SPX and EXS domain-containing protein 2 (1053 aa).

Residues 1–339 form the SPX domain; that stretch reads MKFRDYLKDN…PRIAKECRKY (339 aa). Positions 54–88 are enriched in low complexity; it reads NNINKNNNNNNNNNNNNNNNNNNNNNINNNNNNNN. Residues 54-137 are disordered; the sequence is NNINKNNNNN…VGDEDGGDDD (84 aa). Residues 95 to 112 show a composition bias toward polar residues; sequence QTNSNNISIPNQMAPQES. The segment covering 113 to 122 has biased composition (acidic residues); the sequence is SGEDEDDENE. Helical transmembrane passes span 391–411, 427–447, 476–496, 510–530, 561–581, 595–615, 630–652, 666–686, 712–732, and 745–765; these read YIIGFLIGASAILIAQVIFKF, MAWLLFRISSLPIILGTLFAL, YLMYGMIFVTMWLVVFNVYVD, YLLLIPLLFILGSIFFLILPF, FFMSVQLLCLGEFLFNMQQIV, GVCFKHKAVIFPILSVLPFYW, FFPHITSAIRSTFSIVTNILLWV, ILWFIINVVGTVYKLYADFTV, WVYYVAMSFDTFFRFVWLIVF, and PLFLFWFSLSEIAWAAQFIFF. The 203-residue stretch at 596-798 folds into the EXS domain; that stretch reads VCFKHKAVIF…SQDYKNYMEE (203 aa). Disordered regions lie at residues 799–871 and 1023–1053; these read KKSR…VDDE and HPELNSSNRNQVDPNSPMNRLITRADLNKSR. The segment covering 842–853 has biased composition (acidic residues); that stretch reads DDDDDDESIDSD. A compositionally biased stretch (polar residues) spans 1023-1040; sequence HPELNSSNRNQVDPNSPM.

This sequence belongs to the SYG1 (TC 2.A.94) family.

Its subcellular location is the membrane. This chain is SPX and EXS domain-containing protein 2, found in Dictyostelium discoideum (Social amoeba).